The sequence spans 221 residues: Endo-1,4-beta-xylanase 11A (221 aa).

The first 18 residues, methionine 1–alanine 18, serve as a signal peptide directing secretion. A GH11 domain is found at serine 23–serine 220. The Nucleophile role is filled by glutamate 111. A glycan (N-linked (GlcNAc...) asparagine) is linked at asparagine 117. Glutamate 207 serves as the catalytic Proton donor.

Belongs to the glycosyl hydrolase 11 (cellulase G) family.

It is found in the secreted. It carries out the reaction Endohydrolysis of (1-&gt;4)-beta-D-xylosidic linkages in xylans.. The protein operates within glycan degradation; xylan degradation. In terms of biological role, endo-1,4-beta-xylanase involved in the hydrolysis of xylan, a major structural heterogeneous polysaccharide found in plant biomass representing the second most abundant polysaccharide in the biosphere, after cellulose. The sequence is that of Endo-1,4-beta-xylanase 11A (XYN11A) from Mycosarcoma maydis (Corn smut fungus).